The chain runs to 569 residues: Sulfite reductase [NADPH] hemoprotein beta-component (569 aa).

[4Fe-4S] cluster-binding residues include Cys433, Cys439, Cys478, and Cys482. A siroheme-binding site is contributed by Cys482.

Belongs to the nitrite and sulfite reductase 4Fe-4S domain family. Alpha(8)-beta(8). The alpha component is a flavoprotein, the beta component is a hemoprotein. It depends on siroheme as a cofactor. The cofactor is [4Fe-4S] cluster.

The enzyme catalyses hydrogen sulfide + 3 NADP(+) + 3 H2O = sulfite + 3 NADPH + 4 H(+). It participates in sulfur metabolism; hydrogen sulfide biosynthesis; hydrogen sulfide from sulfite (NADPH route): step 1/1. Functionally, component of the sulfite reductase complex that catalyzes the 6-electron reduction of sulfite to sulfide. This is one of several activities required for the biosynthesis of L-cysteine from sulfate. The chain is Sulfite reductase [NADPH] hemoprotein beta-component from Buchnera aphidicola subsp. Acyrthosiphon pisum (strain Tuc7).